The primary structure comprises 622 residues: SLAIN motif-containing protein-like (622 aa).

A coiled-coil region spans residues 34–60 (DLKEVQKLHELVKRLEIQNQQLKIKRN). 2 disordered regions span residues 404–441 (HRYS…IQNH) and 473–622 (VRSS…DGCY). Over residues 405 to 415 (RYSPSPLSSPR) the composition is skewed to low complexity. 4 stretches are compositionally biased toward polar residues: residues 416–430 (CQSP…TTSR), 484–502 (QGPS…STPP), 525–591 (VSTS…STVP), and 599–611 (SRRS…MNST).

This sequence belongs to the SLAIN motif-containing family.

The chain is SLAIN motif-containing protein-like from Xenopus tropicalis (Western clawed frog).